A 328-amino-acid chain; its full sequence is Ribosomal RNA large subunit methyltransferase F (328 aa).

A disordered region spans residues 1–38 (MTDTPKPPRKKPQRPAKPAAPREKATLHPRNRHQGHYD).

The protein belongs to the methyltransferase superfamily. METTL16/RlmF family.

It localises to the cytoplasm. It catalyses the reaction adenosine(1618) in 23S rRNA + S-adenosyl-L-methionine = N(6)-methyladenosine(1618) in 23S rRNA + S-adenosyl-L-homocysteine + H(+). Specifically methylates the adenine in position 1618 of 23S rRNA. The polypeptide is Ribosomal RNA large subunit methyltransferase F (Pseudomonas syringae pv. tomato (strain ATCC BAA-871 / DC3000)).